Reading from the N-terminus, the 262-residue chain is Outer membrane protein assembly factor BamD (262 aa).

Positions 1–18 (MRKIKSLALLAVAALVIG) are cleaved as a signal peptide. The N-palmitoyl cysteine moiety is linked to residue Cys19. The S-diacylglycerol cysteine moiety is linked to residue Cys19.

It belongs to the BamD family. In terms of assembly, part of the Bam complex.

The protein localises to the cell outer membrane. Its function is as follows. Part of the outer membrane protein assembly complex, which is involved in assembly and insertion of beta-barrel proteins into the outer membrane. The sequence is that of Outer membrane protein assembly factor BamD from Haemophilus influenzae (strain ATCC 51907 / DSM 11121 / KW20 / Rd).